The following is a 640-amino-acid chain: Chaperone protein DnaK (640 aa).

Thr-199 carries the phosphothreonine; by autocatalysis modification. The disordered stretch occupies residues 603-640 (YTQQAEEPQPQKEEGKAAEEDVVDAEFEEVKEDKNKAS). Positions 611–621 (QPQKEEGKAAE) are enriched in basic and acidic residues. A compositionally biased stretch (acidic residues) spans 622–632 (EDVVDAEFEEV).

Belongs to the heat shock protein 70 family.

Acts as a chaperone. The protein is Chaperone protein DnaK of Nitrosococcus oceani (strain ATCC 19707 / BCRC 17464 / JCM 30415 / NCIMB 11848 / C-107).